The chain runs to 484 residues: NADH-ubiquinone oxidoreductase chain 4 (484 aa).

A run of 14 helical transmembrane segments spans residues 1-21 (MLTLLLIIPLVGALMLAPMQG), 33-53 (LALGTSLINFVLSIVLWGEFD), 77-97 (VDGISLYFVLLTTFITPICIL), 109-129 (YFLMCFLVLETLLIAVFVVLD), 130-150 (ILLFYVFFESVLIPLFLIVGI), 162-182 (FLLFLYTLFGSLFMLLAFLVI), 206-226 (LLWLAVFISMAIKTPLLPFHV), 236-256 (PLAGSVILAGLILKLATYGYM), 270-290 (FSPLVQTIAVITLIYASLATL), 295-315 (FKALVAYSSIGHMAVVVLGLF), 326-346 (LLLSIAHGVVSPALFILVGGV), 365-385 (YMPLFSIMFFVFTIFNAAVPL), 405-425 (VFAVLGSTGIVLSAAYSIWLY), and 448-468 (FMLLLPLLFVAVVFGIFPNII).

The protein belongs to the complex I subunit 4 family.

The protein resides in the mitochondrion inner membrane. It catalyses the reaction a ubiquinone + NADH + 5 H(+)(in) = a ubiquinol + NAD(+) + 4 H(+)(out). Core subunit of the mitochondrial membrane respiratory chain NADH dehydrogenase (Complex I) that is believed to belong to the minimal assembly required for catalysis. Complex I functions in the transfer of electrons from NADH to the respiratory chain. The immediate electron acceptor for the enzyme is believed to be ubiquinone. This Mycosarcoma maydis (Corn smut fungus) protein is NADH-ubiquinone oxidoreductase chain 4 (ND4).